Consider the following 227-residue polypeptide: Adenosylcobinamide-GDP ribazoletransferase (227 aa).

5 helical membrane passes run 3–23 (CLKAVVAFFTALPVGGAELDF), 26–46 (IWATPYLAGLMVGGAGGAVYF), 95–115 (GVGGIFAVVALFVLAASARPE), 117–137 (WLDYIVTDLYSKALALVVAAY), and 165–185 (AVAAWLHPAAFLAATVLSLFF).

The protein belongs to the CobS family. It depends on Mg(2+) as a cofactor.

It localises to the cell membrane. The catalysed reaction is alpha-ribazole + adenosylcob(III)inamide-GDP = adenosylcob(III)alamin + GMP + H(+). It carries out the reaction alpha-ribazole 5'-phosphate + adenosylcob(III)inamide-GDP = adenosylcob(III)alamin 5'-phosphate + GMP + H(+). It participates in cofactor biosynthesis; adenosylcobalamin biosynthesis; adenosylcobalamin from cob(II)yrinate a,c-diamide: step 7/7. In terms of biological role, joins adenosylcobinamide-GDP and alpha-ribazole to generate adenosylcobalamin (Ado-cobalamin). Also synthesizes adenosylcobalamin 5'-phosphate from adenosylcobinamide-GDP and alpha-ribazole 5'-phosphate. This Pyrobaculum islandicum (strain DSM 4184 / JCM 9189 / GEO3) protein is Adenosylcobinamide-GDP ribazoletransferase.